A 154-amino-acid chain; its full sequence is Phosphopantetheine adenylyltransferase (154 aa).

Threonine 10 serves as a coordination point for substrate. ATP-binding positions include 10–11 (TF) and histidine 18. 3 residues coordinate substrate: lysine 42, leucine 74, and arginine 88. ATP is bound by residues 89–91 (GLR), glutamate 99, and 124–130 (NAFISSS).

Belongs to the bacterial CoaD family. In terms of assembly, homohexamer. It depends on Mg(2+) as a cofactor.

The protein resides in the cytoplasm. It catalyses the reaction (R)-4'-phosphopantetheine + ATP + H(+) = 3'-dephospho-CoA + diphosphate. It participates in cofactor biosynthesis; coenzyme A biosynthesis; CoA from (R)-pantothenate: step 4/5. Its function is as follows. Reversibly transfers an adenylyl group from ATP to 4'-phosphopantetheine, yielding dephospho-CoA (dPCoA) and pyrophosphate. This is Phosphopantetheine adenylyltransferase from Nautilia profundicola (strain ATCC BAA-1463 / DSM 18972 / AmH).